The primary structure comprises 209 residues: MTTLASSIEHKTKHLAAPFENDENTWMKKYCCQCKSCKMSVPVQPWLPRFFVFGILCPVFWLVNLLAWWFLQYWQPHELEFHDLQEDEYPGFYEYEAITKRTVIPLKEEVLQEIRVMQNFSDSNSEEYYESKDGMPSSFLNVNTEQVEDENDTLKKYRYAFLKKVAHDVLESHDLLRKTFRNWNLRSLLGLLIDSILIIFVVLLCKKSR.

The Lumenal segment spans residues 1–49 (MTTLASSIEHKTKHLAAPFENDENTWMKKYCCQCKSCKMSVPVQPWLPR). Residues 50–70 (FFVFGILCPVFWLVNLLAWWF) form a helical membrane-spanning segment. Residues 71–184 (LQYWQPHELE…LLRKTFRNWN (114 aa)) are Cytoplasmic-facing. A phosphoserine mark is found at Ser121, Ser123, and Ser125. A Phosphothreonine modification is found at Thr153. A helical membrane pass occupies residues 185–205 (LRSLLGLLIDSILIIFVVLLC). Residues 206–209 (KKSR) lie on the Lumenal side of the membrane.

The protein localises to the endomembrane system. In terms of biological role, required for receptor inhibition of inappropriately expressed a-factor receptor (STE3) in MAT a cells. Inhibits signaling by relocalizing the G protein beta-gamma (STE4-STE18) subunit to intracellular membranes. May also be a mechanism for the down-regulation of the mating pheromone response after the zygotic fusion event, promoting the transition of the new diploid cell to vegetative growth. The protein is Protein ASG7 (ASG7) of Saccharomyces cerevisiae (strain YJM789) (Baker's yeast).